The chain runs to 333 residues: Galactinol synthase 5 (333 aa).

Lysine 103 is a catalytic residue. Positions 119, 121, and 257 each coordinate Mn(2+).

The protein belongs to the glycosyltransferase 8 family. Galactosyltransferase subfamily. It depends on a divalent metal cation as a cofactor.

It localises to the cytoplasm. It carries out the reaction myo-inositol + UDP-alpha-D-galactose = alpha-D-galactosyl-(1-&gt;3)-1D-myo-inositol + UDP + H(+). Its function is as follows. Galactinol synthase involved in the biosynthesis of raffinose family oligosaccharides (RFOs) that function as osmoprotectants. May promote plant stress tolerance. This chain is Galactinol synthase 5 (GOLS5), found in Arabidopsis thaliana (Mouse-ear cress).